The following is a 498-amino-acid chain: ATP synthase subunit alpha 1 (498 aa).

Belongs to the ATPase alpha/beta chains family. As to quaternary structure, F-type ATPases have 2 components, CF(1) - the catalytic core - and CF(0) - the membrane proton channel. CF(1) has five subunits: alpha(3), beta(3), gamma(1), delta(1), epsilon(1). CF(0) has three main subunits: a(1), b(2) and c(9-12). The alpha and beta chains form an alternating ring which encloses part of the gamma chain. CF(1) is attached to CF(0) by a central stalk formed by the gamma and epsilon chains, while a peripheral stalk is formed by the delta and b chains.

The protein resides in the cell membrane. It catalyses the reaction ATP + H2O + 4 H(+)(in) = ADP + phosphate + 5 H(+)(out). Its function is as follows. Produces ATP from ADP in the presence of a proton gradient across the membrane. The alpha chain is a regulatory subunit. The sequence is that of ATP synthase subunit alpha 1 from Listeria monocytogenes serovar 1/2a (strain ATCC BAA-679 / EGD-e).